The sequence spans 367 residues: CST complex subunit STN1 (367 aa).

Positions 56-154 (VEILGTVIGR…EIRVTTYYKV (99 aa)) form a DNA-binding region, OB. Winged helix-turn-helix (wHTH) regions lie at residues 190 to 294 (RAFS…YVTR) and 295 to 367 (EDKE…YTAF).

It belongs to the STN1 family. Component of the CST complex, composed of TEN1, CTC1 and STN1. Interacts with TEN1 and CTC1; the interaction is direct. Interacts with ACD/TPP1.

The protein localises to the nucleus. Its subcellular location is the chromosome. It is found in the telomere. In terms of biological role, component of the CST complex, a complex that binds to single-stranded DNA and is required to protect telomeres from DNA degradation. The CST complex binds single-stranded DNA with high affinity in a sequence-independent manner, while isolated subunits bind DNA with low affinity by themselves. In addition to telomere protection, the CST complex has probably a more general role in DNA metabolism at non-telomeric sites. The sequence is that of CST complex subunit STN1 from Ailuropoda melanoleuca (Giant panda).